The primary structure comprises 189 residues: MSSLEISNSCFSPETRSPSSRQSVEDNASEPSGKDVDDVQEKPKDIIQFTAEKLSVGEVSQLVVSPLCGAVSLFVGTTRNNFEGKKVISLEYEAYVPMAENEIRKICNDIRQKWPVRHIAVFHRLGLVPVSEASTVIAVSSAHRAASLEAVSYAIDSLKAKVPIWKKEIYEESTSSWKRNKECFWAAGD.

A compositionally biased stretch (polar residues) spans 1–30; sequence MSSLEISNSCFSPETRSPSSRQSVEDNASE. The disordered stretch occupies residues 1–41; sequence MSSLEISNSCFSPETRSPSSRQSVEDNASEPSGKDVDDVQE. S20 is modified (phosphoserine). Residues 32 to 41 are compositionally biased toward basic and acidic residues; sequence SGKDVDDVQE. Residues 143–144, K159, and 166–168 contribute to the substrate site; these read HR and KKE.

It belongs to the MoaE family. MOCS2B subfamily. As to quaternary structure, heterotetramer; composed of 2 small (MOCS2A) and 2 large (MOCS2B) subunits.

It localises to the cytoplasm. The protein resides in the cytosol. The enzyme catalyses 2 [molybdopterin-synthase sulfur-carrier protein]-C-terminal-Gly-aminoethanethioate + cyclic pyranopterin phosphate + H2O = molybdopterin + 2 [molybdopterin-synthase sulfur-carrier protein]-C-terminal Gly-Gly + 2 H(+). It functions in the pathway cofactor biosynthesis; molybdopterin biosynthesis. Functionally, catalytic subunit of the molybdopterin synthase complex, a complex that catalyzes the conversion of precursor Z into molybdopterin. Acts by mediating the incorporation of 2 sulfur atoms from thiocarboxylated MOCS2A into precursor Z to generate a dithiolene group. This Mus musculus (Mouse) protein is Molybdopterin synthase catalytic subunit.